The chain runs to 284 residues: tRNA-cytidine(32) 2-sulfurtransferase (284 aa).

Positions 45–50 (SGGKDS) match the PP-loop motif motif. C120, C123, and C211 together coordinate [4Fe-4S] cluster.

Belongs to the TtcA family. As to quaternary structure, homodimer. The cofactor is Mg(2+). [4Fe-4S] cluster is required as a cofactor.

The protein resides in the cytoplasm. The catalysed reaction is cytidine(32) in tRNA + S-sulfanyl-L-cysteinyl-[cysteine desulfurase] + AH2 + ATP = 2-thiocytidine(32) in tRNA + L-cysteinyl-[cysteine desulfurase] + A + AMP + diphosphate + H(+). It functions in the pathway tRNA modification. Its function is as follows. Catalyzes the ATP-dependent 2-thiolation of cytidine in position 32 of tRNA, to form 2-thiocytidine (s(2)C32). The sulfur atoms are provided by the cysteine/cysteine desulfurase (IscS) system. The polypeptide is tRNA-cytidine(32) 2-sulfurtransferase (Alcanivorax borkumensis (strain ATCC 700651 / DSM 11573 / NCIMB 13689 / SK2)).